A 1014-amino-acid chain; its full sequence is 2-oxoglutarate dehydrogenase, mitochondrial (1014 aa).

A mitochondrion-targeting transit peptide spans 1–30 (MLRFVSSQTCRYSSRGLLKTSLLKNASTVK). 4 residues coordinate thiamine diphosphate: R306, D406, N439, and I441. Residues D406, N439, and I441 each coordinate Mg(2+).

This sequence belongs to the alpha-ketoglutarate dehydrogenase family. Component of the 2-oxoglutarate dehydrogenase complex (OGDC), also called alpha-ketoglutarate dehydrogenase (KGDH) complex. The copmplex is composed of the catalytic subunits OGDH (2-oxoglutarate dehydrogenase KGD1; also called E1 subunit), DLST (dihydrolipoamide succinyltransferase KGD2; also called E2 subunit) and DLD (dihydrolipoamide dehydrogenase LPD1; also called E3 subunit), and the assembly factor KGD4. Thiamine diphosphate serves as cofactor. The cofactor is Mg(2+).

It is found in the mitochondrion. It localises to the mitochondrion matrix. Its subcellular location is the mitochondrion nucleoid. The catalysed reaction is N(6)-[(R)-lipoyl]-L-lysyl-[protein] + 2-oxoglutarate + H(+) = N(6)-[(R)-S(8)-succinyldihydrolipoyl]-L-lysyl-[protein] + CO2. With respect to regulation, catabolite repressed. Functionally, the 2-oxoglutarate dehydrogenase complex catalyzes the overall conversion of 2-oxoglutarate to succinyl-CoA and CO(2). It contains multiple copies of three enzymatic components: 2-oxoglutarate dehydrogenase (E1), dihydrolipoamide succinyltransferase (E2) and lipoamide dehydrogenase (E3). The protein is 2-oxoglutarate dehydrogenase, mitochondrial (KGD1) of Saccharomyces cerevisiae (strain ATCC 204508 / S288c) (Baker's yeast).